The chain runs to 104 residues: Synaptic plasticity regulator PANTS (104 aa).

The interval 58–104 (RRSAEAQADSLPPGPEGEPRVAGAGPNAVTGILTRNQGTERPHGDTR) is disordered. The span at 95-104 (GTERPHGDTR) shows a compositional bias: basic and acidic residues.

The protein belongs to the UPF0545 family. As to quaternary structure, interacts with RTN4 isoform A/Nogo-A; the interaction results in enhanced RTN4-mediated inhibition of AMPA receptor clustering. Also interacts with NCAM1, RANBP2 and CCT8. In terms of processing, rapidly degraded by proteolysis following neuronal stimulation, resulting in increased AMPA receptor clustering.

Its subcellular location is the synapse. The protein resides in the synaptic cleft. In terms of biological role, negatively regulates long-term potentiation and modulates adult synaptic plasticity. Stabilizes the interaction of RTN4 isoform A/Nogo-A with its receptors, inhibiting clustering of postsynaptic AMPA receptors at synaptic sites. Upon neuronal stimulation, degraded at synapses, reducing RTN4 signaling and allowing AMPA receptor clustering at individual synapses. In Bos taurus (Bovine), this protein is Synaptic plasticity regulator PANTS.